A 1249-amino-acid polypeptide reads, in one-letter code: MVHPVQVGKRTRMSFGKVKDVTEMPNLIEVQLDSYQWFLREGLHEVFEDINPITNFTGNLVLEFVDYKLDMDNIKYSVEECKERDATYAAPLKVSVRLQNNETGEIKEQEVFMGDFPLMTEQGTFIINGAERVIVSQLVRSPGVYYNYSIDKTGKKLYSATVIPNRGAWLEYETDSNDIIYVRIDKTRKLPITILARAMGFGSDQELLDFFGEDERFRASIEKDNTKTREEGLLEIYKRLRPGEPPTVDSAISLIDSLFFDAKRYDLSRVGRYKFNKKLALNLRIANQIAAMDVINPSTGEIMVEKGQKISRLLAEDIQNAGIKSVDILVDDKLVRVISNNFVDITKQVPFDVSDLQIKELVHYPTLREILDNYSDETTIKEEIKKNLSRLIPKHIIKDDIFATISYELGLPYGIGYVDDIDHLGNRRLRSVGELLQNQFRIGLSRMERVVKERMTIQDQESITPQMLINIRPVAAAIKEFFGSSQLSQFMDQTNPLSELTHKRRLSALGPGGLSRERAGFEVRDVHHSHYGRMCPIETPEGPNIGLINSLATFARVNEYGFIETPYRIVDKENARATEEIRYFTADEEDQCLIAQAKEPLDENGYFVDKKVTVRYLEDVLVVPATDVDLMDVSARQIVSVATAMIPFLENDDASRALMGSNMQRQAVPLLKPQAPIVGTGIEFKAAVDSGVLPKARNAGVVTFVSANEIRVKRDSDGGTDNYRLLKFKRSNQSSCINQRPIVNKGEIVFKNQVLADGPSTDLGEIALGKNIRMGFITWEGYNYEDAMLISEELVREDVFTSMHIEEYECEARDTKLGPEEITRDIPNVSEDALKDIDDRGIIRIGAEVRSGDILVGKVTPKGETELTAEERLLRAIFGEKAREVRDTSLRVPHGEAGIIVDIKVFTRENGDELNPGVNELVRCYIVQKRKISVGDKMAGRHGNKGVISRILPEEDMPFLPDGRPLQICLNPLGVPSRMNIGQVLEVHLGWAASKLGWHISTPVFDGATENEIEECLEKAGYNANGKTVLYDGRTGEPFDNLVTVGIMYILKLAHLVDDKIHARSTGPYSLVTQQPLGGKAQFGGQRFGEMEVWALEAYGAAHTLQEILTVKSDDVVGRVKTYEAIVKGENIPEPGVPESFKVLIKELQALCLDVKVLNENHQEVSLKEYTDDEIADLEVNIEGSEESVPVVPVVESNIEEVEVEVEVEVETETEDGYREDLDEIEYDENFEIETLETDLELDDFNDEH.

This sequence belongs to the RNA polymerase beta chain family. The RNAP catalytic core consists of 2 alpha, 1 beta, 1 beta' and 1 omega subunit. When a sigma factor is associated with the core the holoenzyme is formed, which can initiate transcription.

It carries out the reaction RNA(n) + a ribonucleoside 5'-triphosphate = RNA(n+1) + diphosphate. DNA-dependent RNA polymerase catalyzes the transcription of DNA into RNA using the four ribonucleoside triphosphates as substrates. The polypeptide is DNA-directed RNA polymerase subunit beta (Clostridium botulinum (strain Eklund 17B / Type B)).